Consider the following 603-residue polypeptide: NADH-ubiquinone oxidoreductase chain 5 (603 aa).

16 helical membrane passes run 4–24 (LPTL…LSPL), 38–58 (MAVS…MHSG), 87–107 (LIFM…SLWY), 117–137 (FFKY…ANNL), 140–160 (LFIG…WWYG), 171–191 (AMIY…WFLL), 211–233 (LPLT…HPWL), 241–261 (TPVS…FLLI), 273–293 (ILTL…ICAL), 301–320 (IIAF…IGIN), 331–351 (THAF…HSLG), 366–386 (LPFT…MPFL), 409–429 (LLIT…IIFF), 457–477 (LMLG…PTTV), 488–508 (FMAL…SSFT), and 583–603 (MIKL…LLII).

This sequence belongs to the complex I subunit 5 family.

It is found in the mitochondrion inner membrane. The enzyme catalyses a ubiquinone + NADH + 5 H(+)(in) = a ubiquinol + NAD(+) + 4 H(+)(out). Core subunit of the mitochondrial membrane respiratory chain NADH dehydrogenase (Complex I) that is believed to belong to the minimal assembly required for catalysis. Complex I functions in the transfer of electrons from NADH to the respiratory chain. The immediate electron acceptor for the enzyme is believed to be ubiquinone. In Dugong dugon (Dugong), this protein is NADH-ubiquinone oxidoreductase chain 5 (MT-ND5).